A 421-amino-acid chain; its full sequence is UDP-N-acetylglucosamine 1-carboxyvinyltransferase (421 aa).

Residue 22–23 participates in phosphoenolpyruvate binding; it reads KN. R93 provides a ligand contact to UDP-N-acetyl-alpha-D-glucosamine. The Proton donor role is filled by C117. C117 bears the 2-(S-cysteinyl)pyruvic acid O-phosphothioketal mark. UDP-N-acetyl-alpha-D-glucosamine is bound by residues 122 to 126, D308, and V330; that span reads RPVDL.

Belongs to the EPSP synthase family. MurA subfamily.

Its subcellular location is the cytoplasm. The enzyme catalyses phosphoenolpyruvate + UDP-N-acetyl-alpha-D-glucosamine = UDP-N-acetyl-3-O-(1-carboxyvinyl)-alpha-D-glucosamine + phosphate. Its pathway is cell wall biogenesis; peptidoglycan biosynthesis. Cell wall formation. Adds enolpyruvyl to UDP-N-acetylglucosamine. The polypeptide is UDP-N-acetylglucosamine 1-carboxyvinyltransferase (Ectopseudomonas mendocina (strain ymp) (Pseudomonas mendocina)).